The following is a 511-amino-acid chain: Putative thymidine phosphorylase (511 aa).

The protein belongs to the thymidine/pyrimidine-nucleoside phosphorylase family. Type 2 subfamily.

It catalyses the reaction thymidine + phosphate = 2-deoxy-alpha-D-ribose 1-phosphate + thymine. This is Putative thymidine phosphorylase from Bradyrhizobium sp. (strain BTAi1 / ATCC BAA-1182).